We begin with the raw amino-acid sequence, 428 residues long: Exodeoxyribonuclease 7 large subunit (428 aa).

The protein belongs to the XseA family. As to quaternary structure, heterooligomer composed of large and small subunits.

The protein localises to the cytoplasm. The enzyme catalyses Exonucleolytic cleavage in either 5'- to 3'- or 3'- to 5'-direction to yield nucleoside 5'-phosphates.. Its function is as follows. Bidirectionally degrades single-stranded DNA into large acid-insoluble oligonucleotides, which are then degraded further into small acid-soluble oligonucleotides. The sequence is that of Exodeoxyribonuclease 7 large subunit from Mycobacterium leprae (strain TN).